The following is a 274-amino-acid chain: 16S rRNA (guanine(1405)-N(7))-methyltransferase (274 aa).

Residues Phe-64, 102-104 (HVS), Arg-108, Ala-133, Asp-156, 182-183 (DL), Leu-198, and Gln-207 contribute to the S-adenosyl-L-methionine site.

Belongs to the methyltransferase superfamily. Aminoglycoside resistance family.

It carries out the reaction guanosine(1405) in 16S rRNA + S-adenosyl-L-methionine = N(7)-methylguanosine(1405) in 16S rRNA + S-adenosyl-L-homocysteine. Functionally, specifically methylates the N(7) position of guanine 1405 in 16S rRNA. Confers resistance to various aminoglycosides, including gentamicin and kanamycin. The protein is 16S rRNA (guanine(1405)-N(7))-methyltransferase (grm) of Micromonospora echinospora (Micromonospora purpurea).